Consider the following 189-residue polypeptide: Putative manganese efflux pump MntP (189 aa).

Helical transmembrane passes span 6 to 26 (IFGI…AAGV), 39 to 59 (LAWH…YAGL), 71 to 91 (WIAF…SFDA), 106 to 126 (LVLL…SLSV), 131 to 151 (VWMP…GGLM), and 169 to 189 (VGAG…GVFY).

It belongs to the MntP (TC 9.B.29) family.

Its subcellular location is the cell inner membrane. Its function is as follows. Probably functions as a manganese efflux pump. This is Putative manganese efflux pump MntP from Desulfosudis oleivorans (strain DSM 6200 / JCM 39069 / Hxd3) (Desulfococcus oleovorans).